An 806-amino-acid chain; its full sequence is DNA topoisomerase 4 subunit A (806 aa).

Positions 33 to 499 constitute a Topo IIA-type catalytic domain; the sequence is LPDARDGLKP…EEIKINLEVM (467 aa). Tyr121 acts as the O-(5'-phospho-DNA)-tyrosine intermediate in catalysis.

This sequence belongs to the type II topoisomerase GyrA/ParC subunit family. ParC type 2 subfamily. As to quaternary structure, heterotetramer composed of ParC and ParE.

It localises to the cell membrane. Its subcellular location is the cytoplasm. The enzyme catalyses ATP-dependent breakage, passage and rejoining of double-stranded DNA.. In terms of biological role, topoisomerase IV is essential for chromosome segregation. It relaxes supercoiled DNA. Performs the decatenation events required during the replication of a circular DNA molecule. This Bacillus subtilis (strain 168) protein is DNA topoisomerase 4 subunit A.